Here is a 983-residue protein sequence, read N- to C-terminus: Nuclear factor NF-kappa-B p105 subunit (983 aa).

Positions 47-372 constitute an RHD domain; sequence PYLQIIEQPK…EVQRKRQKLM (326 aa). Cys66 carries the post-translational modification S-nitrosocysteine. The residue at position 342 (Ser342) is a Phosphoserine; by PKA. The Nuclear localization signal motif lies at 365–370; it reads QRKRQK. A GRR region spans residues 377-397; the sequence is DGYGGGSGAGGGGMFGGGGGG. The tract at residues 423-454 is disordered; the sequence is KSNAGMKHELSNSTVKKDEESSDKQSDKWDTK. Basic and acidic residues predominate over residues 428–454; that stretch reads MKHELSNSTVKKDEESSDKQSDKWDTK. ANK repeat units follow at residues 540 to 569, 579 to 608, 612 to 641, 648 to 677, 682 to 712, 716 to 745, and 769 to 799; these read NGDNVLHLSIIHLHRELVKNLLEVMPDMNY, LYQTPLHLAVITKQAEVVEDLLKAGANVNL, HGNSVLHLAAAEGDDKILSLLLKHQKASSM, EGLSAIHMVVTANSLSCLKLLIAAGVDVNA, SGRTALHLAVEQENVPLAGCLLLEGDADVDS, DGTTPLHIAAGRGFTKLAAVLKAAGADPHV, and PGTTPLDMAANWEVYDILNGKPYIAAAAVSE. The Death domain occupies 804–891; it reads QGPLRELNES…EAIEVIQKAL (88 aa). Ser938 is modified (phosphoserine).

In terms of assembly, active NF-kappa-B is a heterodimer of an about 50 kDa DNA-binding subunit and the weak DNA-binding subunit p65. Two heterodimers might form a labile tetramer. In terms of processing, generation of the NF-kappa-B p50 (Nuclear factor NF-kappa-B p50 subunit) transcription factor takes place both cotranslationally and post-translationally via non-mutually exclusive mechanisms. A cotranslational processing allows the production of both p50 and p105 (Nuclear factor NF-kappa-B p105 subunit) from a single NFKB1 mRNA. While translation occurs, the particular unfolded structure after the GRR repeat region acts as a substrate for the proteasome, promoting degradation of the C-terminus. The GRR acts as a proteasomal 'stop signal', protecting the region upstream of the GRR from degradation and promoting generation of p50. It is unclear if limited proteasome degradation during cotranslational processing depends on ubiquitination. NF-kappa-B p50 is also generated post-translationally following ubiquitination by the KPC complex, leading to limited processing by the proteasome downstream of the GRR region, thereby generating p50. Post-translationally, phosphorylation at the C-terminus by IKBKB/IKKB acts as a signal for ubiquitination and promotes either complete degradation or processing to generate the NF-kappa-B p50 (Nuclear factor NF-kappa-B p50 subunit). Phosphorylation at Ser-938 are required for BTRC/BTRCP-mediated ubiquitination and proteolysis. Phosphorylation at Ser-938 is also required for ubiquitination by the KPC complex and limited processing to generate NF-kappa-B p50 (Nuclear factor NF-kappa-B p50 subunit). Polyubiquitinated at multiple Lys residues in the C-terminus. Polyubiquitinated by the SCF(FBXW11) and SCF(BTRC) complexes following phosphorylation at Ser-938, leading to its complete degradation. In contrast, polyubiquitination by the KPC complex following phosphorylation at Ser-938 leads to limited proteosomal processing and generation of the active NF-kappa-B p50 (Nuclear factor NF-kappa-B p50 subunit). In terms of processing, S-nitrosylation of Cys-66 affects DNA binding. Post-translationally, the covalent modification of cysteine by 15-deoxy-Delta12,14-prostaglandin-J2 is autocatalytic and reversible. It may occur as an alternative to other cysteine modifications, such as S-nitrosylation and S-palmitoylation.

It is found in the cytoplasm. Its subcellular location is the nucleus. In terms of biological role, P105 is the precursor of the active p50 subunit (Nuclear factor NF-kappa-B p50 subunit) of the nuclear factor NF-kappa-B. The precursor protein itself does not bind to DNA. Acts as a cytoplasmic retention of attached NF-kappa-B proteins by p105. Its function is as follows. Constitutes the active form, which associates with RELA/p65 to form the NF-kappa-B p65-p50 complex to form a transcription factor. Together with RELA/p65, binds to the kappa-B consensus sequence 5'-GGRNNYYCC-3', located in the enhancer region of genes involved in immune response and acute phase reactions. The protein is Nuclear factor NF-kappa-B p105 subunit (NFKB1) of Gallus gallus (Chicken).